The sequence spans 201 residues: Kunitz type trypsin inhibitor 104 (201 aa).

The N-terminal stretch at 1–24 (MSTRSLTIFILAHVWLLMATTSIA) is a signal peptide. Disulfide bonds link C63–C110, C161–C173, and C166–C169.

It belongs to the protease inhibitor I3 (leguminous Kunitz-type inhibitor) family. Interacts with CP.

Its subcellular location is the secreted. The protein resides in the extracellular space. It is found in the apoplast. Protease inhibitor involved in the control of mycorrhiza establishment and arbuscule development during root colonization by arbuscular mycorrhizal (AM) fungi (e.g. Rhizophagus irregularis). The polypeptide is Kunitz type trypsin inhibitor 104 (Medicago truncatula (Barrel medic)).